Consider the following 200-residue polypeptide: Putative vacuolar protein sorting-associated protein 24 homolog 2 (200 aa).

Positions 2 to 23 (TIKSLLSDIEREERNVHKAIKD) form a coiled coil.

Belongs to the SNF7 family. In terms of assembly, component of the endosomal sorting required for transport complex III (ESCRT-III), composed at least of VPS2, VPS20, VPS24 and VPS32.

Its subcellular location is the endosome. Component of the ESCRT-III complex, which is required for multivesicular bodies (MVBs) formation and sorting of endosomal cargo proteins into MVBs. The ESCRT-III complex is probably involved in the concentration of MVB cargo. This is Putative vacuolar protein sorting-associated protein 24 homolog 2 (VPS24-2) from Arabidopsis thaliana (Mouse-ear cress).